Reading from the N-terminus, the 341-residue chain is Ketol-acid reductoisomerase (NADP(+)) (341 aa).

The 180-residue stretch at alanine 2–threonine 181 folds into the KARI N-terminal Rossmann domain. NADP(+)-binding positions include tyrosine 25–glutamine 28, arginine 48, serine 52, and aspartate 82–glutamine 85. The active site involves histidine 107. Glycine 133 lines the NADP(+) pocket. Positions threonine 182–valine 327 constitute a KARI C-terminal knotted domain. Residues aspartate 190, glutamate 194, glutamate 226, and glutamate 230 each contribute to the Mg(2+) site. Serine 251 provides a ligand contact to substrate.

This sequence belongs to the ketol-acid reductoisomerase family. Mg(2+) is required as a cofactor.

The catalysed reaction is (2R)-2,3-dihydroxy-3-methylbutanoate + NADP(+) = (2S)-2-acetolactate + NADPH + H(+). It carries out the reaction (2R,3R)-2,3-dihydroxy-3-methylpentanoate + NADP(+) = (S)-2-ethyl-2-hydroxy-3-oxobutanoate + NADPH + H(+). It participates in amino-acid biosynthesis; L-isoleucine biosynthesis; L-isoleucine from 2-oxobutanoate: step 2/4. The protein operates within amino-acid biosynthesis; L-valine biosynthesis; L-valine from pyruvate: step 2/4. In terms of biological role, involved in the biosynthesis of branched-chain amino acids (BCAA). Catalyzes an alkyl-migration followed by a ketol-acid reduction of (S)-2-acetolactate (S2AL) to yield (R)-2,3-dihydroxy-isovalerate. In the isomerase reaction, S2AL is rearranged via a Mg-dependent methyl migration to produce 3-hydroxy-3-methyl-2-ketobutyrate (HMKB). In the reductase reaction, this 2-ketoacid undergoes a metal-dependent reduction by NADPH to yield (R)-2,3-dihydroxy-isovalerate. This is Ketol-acid reductoisomerase (NADP(+)) from Shouchella clausii (strain KSM-K16) (Alkalihalobacillus clausii).